The primary structure comprises 646 residues: Chaperone protein DnaK (646 aa).

Threonine 198 bears the Phosphothreonine; by autocatalysis mark. The disordered stretch occupies residues 603-646 (EQAQQAGGAEGFDPNAFQGGDAGQQKADDGVVDAEFTEVKDDKK). Residues 618-627 (AFQGGDAGQQ) show a composition bias toward low complexity.

It belongs to the heat shock protein 70 family.

Acts as a chaperone. The polypeptide is Chaperone protein DnaK (Acinetobacter baumannii (strain ACICU)).